The chain runs to 589 residues: Arginine--tRNA ligase (589 aa).

Residues 132-142 (PNTNKPLHVGH) carry the 'HIGH' region motif.

The protein belongs to the class-I aminoacyl-tRNA synthetase family. In terms of assembly, monomer.

The protein localises to the cytoplasm. The catalysed reaction is tRNA(Arg) + L-arginine + ATP = L-arginyl-tRNA(Arg) + AMP + diphosphate. This is Arginine--tRNA ligase from Treponema pallidum subsp. pallidum (strain SS14).